Reading from the N-terminus, the 349-residue chain is Hydroxymethylglutaryl-CoA synthase (349 aa).

(3S)-3-hydroxy-3-methylglutaryl-CoA contacts are provided by Asp-30 and Ala-31. The active-site Proton donor/acceptor is Glu-82. (3S)-3-hydroxy-3-methylglutaryl-CoA-binding residues include Cys-114 and Thr-155. Cys-114 functions as the Acyl-thioester intermediate in the catalytic mechanism. Position 203 (Arg-203) interacts with CoA. (3S)-3-hydroxy-3-methylglutaryl-CoA contacts are provided by Thr-205 and His-238. His-238 functions as the Proton donor/acceptor in the catalytic mechanism. Lys-243 is a binding site for CoA. (3S)-3-hydroxy-3-methylglutaryl-CoA contacts are provided by Asn-270 and Ser-300.

Belongs to the thiolase-like superfamily. Archaeal HMG-CoA synthase family. Interacts with acetoacetyl-CoA thiolase that catalyzes the precedent step in the pathway and with a DUF35 protein. The acetoacetyl-CoA thiolase/HMG-CoA synthase complex channels the intermediate via a fused CoA-binding site, which allows for efficient coupling of the endergonic thiolase reaction with the exergonic HMGCS reaction.

The catalysed reaction is acetoacetyl-CoA + acetyl-CoA + H2O = (3S)-3-hydroxy-3-methylglutaryl-CoA + CoA + H(+). The protein operates within metabolic intermediate biosynthesis; (R)-mevalonate biosynthesis; (R)-mevalonate from acetyl-CoA: step 2/3. Its function is as follows. Catalyzes the condensation of acetyl-CoA with acetoacetyl-CoA to form 3-hydroxy-3-methylglutaryl-CoA (HMG-CoA). Functions in the mevalonate (MVA) pathway leading to isopentenyl diphosphate (IPP), a key precursor for the biosynthesis of isoprenoid compounds that are building blocks of archaeal membrane lipids. This Methanococcus maripaludis (strain DSM 14266 / JCM 13030 / NBRC 101832 / S2 / LL) protein is Hydroxymethylglutaryl-CoA synthase.